A 503-amino-acid polypeptide reads, in one-letter code: Excitatory amino acid transporter (503 aa).

Residues 1–18 (MPPDTRINKEIMVSWIRK) are Cytoplasmic-facing. 3 helical membrane passes run 19-39 (NLLLVLTVSSVVLGALCGFLL), 59-79 (LMHMLKMMILPLIMSSLISGL), and 96-116 (TYYMFTTAVAVVTGIFLVLVI). Topologically, residues 117–198 (HPGDPTIKKE…SLDYVKASVE (82 aa)) are extracellular. Residues N177 and N187 are each glycosylated (N-linked (GlcNAc...) asparagine). 5 helical membrane passes run 199–219 (YTSGMNVLGVIVFCIAIGISL), 239–259 (VIMKLVMTVMWYSPFGIFCLI), 281–301 (VTVLSGLAIHSLISLPLIFFV), 369–389 (AVAAIFIAQINGVHLSFGQVV), and 400–420 (IGAASVPSAGLVTMLLVLTAV).

This sequence belongs to the dicarboxylate/amino acid:cation symporter (DAACS) (TC 2.A.23) family.

The protein resides in the membrane. Its function is as follows. Transports L-glutamate and also L- and D-aspartate. Essential for terminating the postsynaptic action of glutamate by rapidly removing released glutamate from the synaptic cleft. Acts as a symport by cotransporting sodium. This Caenorhabditis elegans protein is Excitatory amino acid transporter (glt-1).